A 552-amino-acid polypeptide reads, in one-letter code: Thermosome subunit beta (552 aa).

It belongs to the TCP-1 chaperonin family. Forms a Heterooligomeric complex of two stacked nine-membered rings; one of alpha and the other of beta subunits. In terms of processing, the N-terminus is blocked.

Molecular chaperone; binds unfolded polypeptides in vitro, and has a weak ATPase activity. The polypeptide is Thermosome subunit beta (thsB) (Sulfurisphaera tokodaii (strain DSM 16993 / JCM 10545 / NBRC 100140 / 7) (Sulfolobus tokodaii)).